Here is a 296-residue protein sequence, read N- to C-terminus: 4-hydroxy-tetrahydrodipicolinate synthase (296 aa).

Pyruvate is bound at residue T49. Catalysis depends on Y137, which acts as the Proton donor/acceptor. K166 functions as the Schiff-base intermediate with substrate in the catalytic mechanism. I208 provides a ligand contact to pyruvate.

Belongs to the DapA family. Homotetramer; dimer of dimers.

It is found in the cytoplasm. The catalysed reaction is L-aspartate 4-semialdehyde + pyruvate = (2S,4S)-4-hydroxy-2,3,4,5-tetrahydrodipicolinate + H2O + H(+). Its pathway is amino-acid biosynthesis; L-lysine biosynthesis via DAP pathway; (S)-tetrahydrodipicolinate from L-aspartate: step 3/4. Its function is as follows. Catalyzes the condensation of (S)-aspartate-beta-semialdehyde [(S)-ASA] and pyruvate to 4-hydroxy-tetrahydrodipicolinate (HTPA). The protein is 4-hydroxy-tetrahydrodipicolinate synthase of Chlorobium luteolum (strain DSM 273 / BCRC 81028 / 2530) (Pelodictyon luteolum).